The following is a 172-amino-acid chain: Co-chaperone protein HscB homolog (172 aa).

The J domain occupies 2-74; it reads NHFELFGLVE…LRRAEYLLSL (73 aa).

The protein belongs to the HscB family. Interacts with HscA and stimulates its ATPase activity.

Co-chaperone involved in the maturation of iron-sulfur cluster-containing proteins. Seems to help targeting proteins to be folded toward HscA. The polypeptide is Co-chaperone protein HscB homolog (Aeromonas salmonicida (strain A449)).